Here is a 127-residue protein sequence, read N- to C-terminus: MRHRKSGRHLNRTSSHRHAMFKNMCVSLVEHEVIKTTLPKAKELRRHIEPLITLAKQDSVANRRLAFNRTRSKEAVGKLFNELGPRYVERPGGYVRILKCGFRAGDNAPMAYVELVDRPVVEEAAEE.

It belongs to the bacterial ribosomal protein bL17 family. In terms of assembly, part of the 50S ribosomal subunit. Contacts protein L32.

The sequence is that of Large ribosomal subunit protein bL17 from Chromohalobacter salexigens (strain ATCC BAA-138 / DSM 3043 / CIP 106854 / NCIMB 13768 / 1H11).